We begin with the raw amino-acid sequence, 427 residues long: Trigger factor (427 aa).

Positions 163–248 (GDTVVIDFVG…VHEVKAKEVP (86 aa)) constitute a PPIase FKBP-type domain.

This sequence belongs to the FKBP-type PPIase family. Tig subfamily.

It localises to the cytoplasm. It carries out the reaction [protein]-peptidylproline (omega=180) = [protein]-peptidylproline (omega=0). Its function is as follows. Involved in protein export. Acts as a chaperone by maintaining the newly synthesized protein in an open conformation. Functions as a peptidyl-prolyl cis-trans isomerase. This is Trigger factor from Streptococcus equi subsp. zooepidemicus (strain MGCS10565).